The sequence spans 456 residues: N(6)-adenosine-methyltransferase non-catalytic subunit METTL14 (456 aa).

The segment at 43-74 is disordered; it reads EIAETRETSRASYDTSAAVSKRKLPEEGKADE. Positions 65–74 are enriched in basic and acidic residues; sequence KLPEEGKADE. 2 interaction with METTL3 regions span residues 135 to 136 and 237 to 238; these read RD and SG. The positively charged region required for RNA-binding stretch occupies residues 245-254; it reads RMCLRKWGFR. 2 interaction with METTL3 regions span residues 255-258 and 278-287; these read RSED and KAIFQRTKEH. Positions 297 to 298 are positively charged region required for RNA-binding; that stretch reads HR. An interaction with METTL3 region spans residues 308-312; it reads NVDID. Residues 395-456 form a disordered region; the sequence is LRPKTPPPKS…GPHRGVFAPR (62 aa). The segment covering 410–421 has biased composition (gly residues); it reads ASRGGGRGGASA. Residues 423–441 show a composition bias toward basic and acidic residues; sequence RGERGRERNRGSFRGDRGN.

The protein belongs to the MT-A70-like family. Heterodimer; heterodimerizes with mettl3 to form an antiparallel heterodimer that constitutes an active methyltransferase. Component of the WMM complex, a N6-methyltransferase complex composed of a catalytic subcomplex, named MAC, and of an associated subcomplex, named MACOM. The MAC subcomplex is composed of mettl3 and mettl14.

Its subcellular location is the nucleus. The METTL3-METTL14 heterodimer forms a N6-methyltransferase complex that methylates adenosine residues at the N(6) position of some mRNAs and regulates the circadian clock, differentiation of embryonic stem cells and cortical neurogenesis. In the heterodimer formed with mettl3, mettl14 constitutes the RNA-binding scaffold that recognizes the substrate rather than the catalytic core. N6-methyladenosine (m6A), which takes place at the 5'-[AG]GAC-3' consensus sites of some mRNAs, plays a role in mRNA stability and processing. This Xenopus laevis (African clawed frog) protein is N(6)-adenosine-methyltransferase non-catalytic subunit METTL14 (mettl14).